The chain runs to 314 residues: Malate dehydrogenase (314 aa).

NAD(+) contacts are provided by residues 7–13 (GAAGGIG) and Asp34. Residues Arg81 and Arg87 each coordinate substrate. NAD(+) contacts are provided by residues Asn94 and 117–119 (ITN). Substrate is bound by residues Asn119 and Arg153. His177 acts as the Proton acceptor in catalysis. Residue Met230 participates in NAD(+) binding.

The protein belongs to the LDH/MDH superfamily. MDH type 1 family. Homodimer.

The enzyme catalyses (S)-malate + NAD(+) = oxaloacetate + NADH + H(+). Catalyzes the reversible oxidation of malate to oxaloacetate. This Glaesserella parasuis serovar 5 (strain SH0165) (Haemophilus parasuis) protein is Malate dehydrogenase.